Here is a 374-residue protein sequence, read N- to C-terminus: Chaperone protein DnaJ (374 aa).

One can recognise a J domain in the interval 5-69 (NYYQILGVSK…QKRAAYDRLG (65 aa)). The CR-type zinc-finger motif lies at 137-215 (GIEKNISFSS…CHGMGRYHKQ (79 aa)). Residues cysteine 150, cysteine 153, cysteine 167, cysteine 170, cysteine 189, cysteine 192, cysteine 203, and cysteine 206 each contribute to the Zn(2+) site. CXXCXGXG motif repeat units lie at residues 150 to 157 (CDTCHGSG), 167 to 174 (CDACSGVG), 189 to 196 (CHKCQGNG), and 203 to 210 (CKKCHGMG).

This sequence belongs to the DnaJ family. As to quaternary structure, homodimer. The cofactor is Zn(2+).

The protein localises to the cytoplasm. In terms of biological role, participates actively in the response to hyperosmotic and heat shock by preventing the aggregation of stress-denatured proteins and by disaggregating proteins, also in an autonomous, DnaK-independent fashion. Unfolded proteins bind initially to DnaJ; upon interaction with the DnaJ-bound protein, DnaK hydrolyzes its bound ATP, resulting in the formation of a stable complex. GrpE releases ADP from DnaK; ATP binding to DnaK triggers the release of the substrate protein, thus completing the reaction cycle. Several rounds of ATP-dependent interactions between DnaJ, DnaK and GrpE are required for fully efficient folding. Also involved, together with DnaK and GrpE, in the DNA replication of plasmids through activation of initiation proteins. The protein is Chaperone protein DnaJ of Rickettsia massiliae (strain Mtu5).